The primary structure comprises 73 residues: Methionyl-tRNA formyltransferase (73 aa).

It belongs to the Fmt family.

The enzyme catalyses L-methionyl-tRNA(fMet) + (6R)-10-formyltetrahydrofolate = N-formyl-L-methionyl-tRNA(fMet) + (6S)-5,6,7,8-tetrahydrofolate + H(+). Functionally, attaches a formyl group to the free amino group of methionyl-tRNA(fMet). The formyl group appears to play a dual role in the initiator identity of N-formylmethionyl-tRNA by promoting its recognition by IF2 and preventing the misappropriation of this tRNA by the elongation apparatus. This chain is Methionyl-tRNA formyltransferase (fmt), found in Rickettsia parkeri.